A 454-amino-acid polypeptide reads, in one-letter code: Aspartate aminotransferase P2, mitochondrial (454 aa).

The transit peptide at 1–49 directs the protein to the mitochondrion; that stretch reads SSLLSIPSLSLQYNDKLKVGGNSLRFSKEQSNTFSNAKSSCRISMVAAV. Gly86, Trp182, and Asn235 together coordinate L-aspartate. Position 299 is an N6-(pyridoxal phosphate)lysine (Lys299). Position 428 (Arg428) interacts with L-aspartate.

It belongs to the class-I pyridoxal-phosphate-dependent aminotransferase family. Homodimer. Pyridoxal 5'-phosphate is required as a cofactor.

It is found in the mitochondrion matrix. The catalysed reaction is L-aspartate + 2-oxoglutarate = oxaloacetate + L-glutamate. Important for the metabolism of amino acids and Krebs-cycle related organic acids. In plants, it is involved in nitrogen metabolism and in aspects of carbon and energy metabolism. The chain is Aspartate aminotransferase P2, mitochondrial from Lupinus angustifolius (Narrow-leaved blue lupine).